Consider the following 155-residue polypeptide: Small ribosomal subunit protein uS7 (155 aa).

It belongs to the universal ribosomal protein uS7 family. In terms of assembly, part of the 30S ribosomal subunit. Contacts proteins S9 and S11.

Its function is as follows. One of the primary rRNA binding proteins, it binds directly to 16S rRNA where it nucleates assembly of the head domain of the 30S subunit. Is located at the subunit interface close to the decoding center, probably blocks exit of the E-site tRNA. This Malacoplasma penetrans (strain HF-2) (Mycoplasma penetrans) protein is Small ribosomal subunit protein uS7.